A 509-amino-acid polypeptide reads, in one-letter code: UDP-N-acetylmuramoyl-L-alanyl-D-glutamate--2,6-diaminopimelate ligase (509 aa).

Ser32 contributes to the UDP-N-acetyl-alpha-D-muramoyl-L-alanyl-D-glutamate binding site. ATP is bound at residue 117–123 (GTNGKTT). UDP-N-acetyl-alpha-D-muramoyl-L-alanyl-D-glutamate contacts are provided by residues 159 to 160 (TT), Ser186, Gln192, and Arg194. Lys226 carries the post-translational modification N6-carboxylysine. Meso-2,6-diaminopimelate-binding positions include Arg401, 425–428 (DNPR), Gly476, and Glu480. Residues 425–428 (DNPR) carry the Meso-diaminopimelate recognition motif motif.

It belongs to the MurCDEF family. MurE subfamily. Requires Mg(2+) as cofactor. Carboxylation is probably crucial for Mg(2+) binding and, consequently, for the gamma-phosphate positioning of ATP.

Its subcellular location is the cytoplasm. It catalyses the reaction UDP-N-acetyl-alpha-D-muramoyl-L-alanyl-D-glutamate + meso-2,6-diaminopimelate + ATP = UDP-N-acetyl-alpha-D-muramoyl-L-alanyl-gamma-D-glutamyl-meso-2,6-diaminopimelate + ADP + phosphate + H(+). It functions in the pathway cell wall biogenesis; peptidoglycan biosynthesis. Catalyzes the addition of meso-diaminopimelic acid to the nucleotide precursor UDP-N-acetylmuramoyl-L-alanyl-D-glutamate (UMAG) in the biosynthesis of bacterial cell-wall peptidoglycan. This chain is UDP-N-acetylmuramoyl-L-alanyl-D-glutamate--2,6-diaminopimelate ligase, found in Prochlorococcus marinus (strain NATL2A).